The sequence spans 347 residues: Isopentenyl-diphosphate delta-isomerase (347 aa).

9-10 provides a ligand contact to substrate; sequence RK. FMN-binding positions include S67, 68-70, S98, and N127; that span reads SMT. 98-100 is a substrate binding site; it reads SQR. Position 162 (Q162) interacts with substrate. E163 is a binding site for Mg(2+). Residues K194, T224, 274–276, and 295–296 contribute to the FMN site; these read GIR and AA.

It belongs to the IPP isomerase type 2 family. As to quaternary structure, homooctamer. Dimer of tetramers. The cofactor is FMN. NADPH is required as a cofactor. Mg(2+) serves as cofactor.

The protein localises to the cytoplasm. It catalyses the reaction isopentenyl diphosphate = dimethylallyl diphosphate. In terms of biological role, involved in the biosynthesis of isoprenoids. Catalyzes the 1,3-allylic rearrangement of the homoallylic substrate isopentenyl (IPP) to its allylic isomer, dimethylallyl diphosphate (DMAPP). This chain is Isopentenyl-diphosphate delta-isomerase, found in Cronobacter sakazakii (strain ATCC BAA-894) (Enterobacter sakazakii).